A 336-amino-acid polypeptide reads, in one-letter code: Holliday junction branch migration complex subunit RuvB (336 aa).

The interval 4–184 (ADRLISAGTT…FGIVQRLEFY (181 aa)) is large ATPase domain (RuvB-L). ATP-binding positions include Ile23, Arg24, Gly65, Lys68, Thr69, Thr70, 131–133 (EDY), Arg174, Tyr184, and Arg221. Residue Thr69 participates in Mg(2+) binding. Residues 185 to 255 (QVPDLQYIVS…IAAQALDMLN (71 aa)) are small ATPAse domain (RuvB-S). A head domain (RuvB-H) region spans residues 258–336 (AEGFDYMDRK…HFGITPPEMP (79 aa)). Residues Arg294, Arg313, and Arg318 each contribute to the DNA site.

The protein belongs to the RuvB family. In terms of assembly, homohexamer. Forms an RuvA(8)-RuvB(12)-Holliday junction (HJ) complex. HJ DNA is sandwiched between 2 RuvA tetramers; dsDNA enters through RuvA and exits via RuvB. An RuvB hexamer assembles on each DNA strand where it exits the tetramer. Each RuvB hexamer is contacted by two RuvA subunits (via domain III) on 2 adjacent RuvB subunits; this complex drives branch migration. In the full resolvosome a probable DNA-RuvA(4)-RuvB(12)-RuvC(2) complex forms which resolves the HJ.

It localises to the cytoplasm. It carries out the reaction ATP + H2O = ADP + phosphate + H(+). Its function is as follows. The RuvA-RuvB-RuvC complex processes Holliday junction (HJ) DNA during genetic recombination and DNA repair, while the RuvA-RuvB complex plays an important role in the rescue of blocked DNA replication forks via replication fork reversal (RFR). RuvA specifically binds to HJ cruciform DNA, conferring on it an open structure. The RuvB hexamer acts as an ATP-dependent pump, pulling dsDNA into and through the RuvAB complex. RuvB forms 2 homohexamers on either side of HJ DNA bound by 1 or 2 RuvA tetramers; 4 subunits per hexamer contact DNA at a time. Coordinated motions by a converter formed by DNA-disengaged RuvB subunits stimulates ATP hydrolysis and nucleotide exchange. Immobilization of the converter enables RuvB to convert the ATP-contained energy into a lever motion, pulling 2 nucleotides of DNA out of the RuvA tetramer per ATP hydrolyzed, thus driving DNA branch migration. The RuvB motors rotate together with the DNA substrate, which together with the progressing nucleotide cycle form the mechanistic basis for DNA recombination by continuous HJ branch migration. Branch migration allows RuvC to scan DNA until it finds its consensus sequence, where it cleaves and resolves cruciform DNA. The protein is Holliday junction branch migration complex subunit RuvB of Shigella sonnei (strain Ss046).